The primary structure comprises 530 residues: MAKASSIRQFVTSRFIVPGTGLLKGFKLVEDSNSITHLFQVHARLITSGNFWDSSWAIRLLKSSSRFGDSSYTVSIYRSIGKLYCANPVFKAYLVSSSPKQALGFYFDILRFGFVPDSYTFVSLISCIEKTCCVDSGKMCHGQAIKHGCDQVLPVQNSLMHMYTCCGALDLAKKLFVEIPKRDIVSWNSIIAGMVRNGDVLAAHKLFDEMPDKNIISWNIMISAYLGANNPGVSISLFREMVRAGFQGNESTLVLLLNACGRSARLKEGRSVHASLIRTFLNSSVVIDTALIDMYGKCKEVGLARRIFDSLSIRNKVTWNVMILAHCLHGRPEGGLELFEAMINGMLRPDEVTFVGVLCGCARAGLVSQGQSYYSLMVDEFQIKPNFGHQWCMANLYSSAGFPEEAEEALKNLPDEDVTPESTKWANLLSSSRFTGNPTLGESIAKSLIETDPLNYKYYHLLMNIYSVTGRWEDVNRVREMVKERKIGRIPGCGLVDLKEIVHGLRLGCKEAEKVFTETSLEKCYSDSPS.

10 PPR repeats span residues Lys82–Pro116, Asp117–Gln151, Val152–Arg182, Asp183–Ser217, Trp218–Gly248, Asn249–Ser283, Ser284–Arg314, Asn315–Pro349, Asp350–Glu380, and Asn386–Pro420. The type E motif stretch occupies residues Lys424–Lys499.

Belongs to the PPR family. PCMP-E subfamily.

This is Pentatricopeptide repeat-containing protein At3g51320 from Arabidopsis thaliana (Mouse-ear cress).